Consider the following 256-residue polypeptide: Thiazole synthase (256 aa).

Lysine 95 acts as the Schiff-base intermediate with DXP in catalysis. 1-deoxy-D-xylulose 5-phosphate-binding positions include glycine 156, 182–183, and 204–205; these read AG and NT.

It belongs to the ThiG family. As to quaternary structure, homotetramer. Forms heterodimers with either ThiH or ThiS.

Its subcellular location is the cytoplasm. It carries out the reaction [ThiS sulfur-carrier protein]-C-terminal-Gly-aminoethanethioate + 2-iminoacetate + 1-deoxy-D-xylulose 5-phosphate = [ThiS sulfur-carrier protein]-C-terminal Gly-Gly + 2-[(2R,5Z)-2-carboxy-4-methylthiazol-5(2H)-ylidene]ethyl phosphate + 2 H2O + H(+). Its pathway is cofactor biosynthesis; thiamine diphosphate biosynthesis. Catalyzes the rearrangement of 1-deoxy-D-xylulose 5-phosphate (DXP) to produce the thiazole phosphate moiety of thiamine. Sulfur is provided by the thiocarboxylate moiety of the carrier protein ThiS. In vitro, sulfur can be provided by H(2)S. This is Thiazole synthase from Salmonella agona (strain SL483).